The sequence spans 544 residues: Ribosomal protein S6 kinase-like 1 (544 aa).

Residues 87-115 enclose the MIT domain; the sequence is VHVDPNKERREAVKLKITKYLRRAEEIFN. Positions 145-534 constitute a Protein kinase domain; that stretch reads SALEQLKGCR…TSRLKSHPFF (390 aa). ATP is bound by residues 151-159 and Lys-177; that span reads KGCRVVGII. Disordered regions lie at residues 262–344 and 353–372; these read PAEL…HWVR and AYGR…SLGS. Residues 303–313 are compositionally biased toward polar residues; that stretch reads SRPSAVFSSDP. Asp-407 (proton acceptor) is an active-site residue.

The protein belongs to the protein kinase superfamily. Ser/Thr protein kinase family. S6 kinase subfamily.

The catalysed reaction is L-seryl-[protein] + ATP = O-phospho-L-seryl-[protein] + ADP + H(+). It carries out the reaction L-threonyl-[protein] + ATP = O-phospho-L-threonyl-[protein] + ADP + H(+). In Mus musculus (Mouse), this protein is Ribosomal protein S6 kinase-like 1 (Rps6kl1).